We begin with the raw amino-acid sequence, 237 residues long: tRNA1(Val) (adenine(37)-N6)-methyltransferase (237 aa).

The protein belongs to the methyltransferase superfamily. tRNA (adenine-N(6)-)-methyltransferase family.

The protein localises to the cytoplasm. The catalysed reaction is adenosine(37) in tRNA1(Val) + S-adenosyl-L-methionine = N(6)-methyladenosine(37) in tRNA1(Val) + S-adenosyl-L-homocysteine + H(+). Its function is as follows. Specifically methylates the adenine in position 37 of tRNA(1)(Val) (anticodon cmo5UAC). This Bacteroides thetaiotaomicron (strain ATCC 29148 / DSM 2079 / JCM 5827 / CCUG 10774 / NCTC 10582 / VPI-5482 / E50) protein is tRNA1(Val) (adenine(37)-N6)-methyltransferase.